The sequence spans 158 residues: NAD(P)H-quinone oxidoreductase subunit J, chloroplastic (158 aa).

Belongs to the complex I 30 kDa subunit family. In terms of assembly, NDH is composed of at least 16 different subunits, 5 of which are encoded in the nucleus.

It is found in the plastid. The protein resides in the chloroplast thylakoid membrane. The catalysed reaction is a plastoquinone + NADH + (n+1) H(+)(in) = a plastoquinol + NAD(+) + n H(+)(out). It carries out the reaction a plastoquinone + NADPH + (n+1) H(+)(in) = a plastoquinol + NADP(+) + n H(+)(out). Its function is as follows. NDH shuttles electrons from NAD(P)H:plastoquinone, via FMN and iron-sulfur (Fe-S) centers, to quinones in the photosynthetic chain and possibly in a chloroplast respiratory chain. The immediate electron acceptor for the enzyme in this species is believed to be plastoquinone. Couples the redox reaction to proton translocation, and thus conserves the redox energy in a proton gradient. This chain is NAD(P)H-quinone oxidoreductase subunit J, chloroplastic, found in Acorus calamus var. americanus (American sweet flag).